We begin with the raw amino-acid sequence, 216 residues long: Urease accessory protein UreG (216 aa).

25-32 provides a ligand contact to GTP; it reads GPVGSGKT.

It belongs to the SIMIBI class G3E GTPase family. UreG subfamily. In terms of assembly, homodimer. UreD, UreF and UreG form a complex that acts as a GTP-hydrolysis-dependent molecular chaperone, activating the urease apoprotein by helping to assemble the nickel containing metallocenter of UreC. The UreE protein probably delivers the nickel.

The protein resides in the cytoplasm. Facilitates the functional incorporation of the urease nickel metallocenter. This process requires GTP hydrolysis, probably effectuated by UreG. This Burkholderia pseudomallei (strain 1710b) protein is Urease accessory protein UreG.